A 748-amino-acid polypeptide reads, in one-letter code: Methylmalonyl-CoA mutase, mitochondrial (748 aa).

The N-terminal 30 residues, 1–30 (MLRAKNQLFLLSPHYLKQLNIPSASRWKRL), are a transit peptide targeting the mitochondrion. Glutamine 48 is a malonyl-CoA binding site. The residue at position 87 (lysine 87) is an N6-acetyllysine. Malonyl-CoA is bound by residues 94 to 97 (YPTM) and 104 to 108 (TIRQY). N6-acetyllysine is present on lysine 210. Residues 214-216 (TIQ), arginine 226, lysine 253, histidine 263, and 302-304 (RLS) contribute to the malonyl-CoA site. N6-acetyllysine is present on lysine 333. The residue at position 341 (lysine 341) is an N6-succinyllysine. A Phosphoserine modification is found at serine 479. Lysine 593 carries the post-translational modification N6-succinyllysine. Lysine 600 is modified (N6-acetyllysine). The B12-binding domain maps to 612–744 (RPRLLVAKMG…DDIEKCLAEK (133 aa)). Residue histidine 625 participates in adenosylcob(III)alamin binding.

Belongs to the methylmalonyl-CoA mutase family. Homodimer. Interacts (the apoenzyme form) with MMAA; the interaction is GTP dependent. Adenosylcob(III)alamin serves as cofactor.

The protein resides in the mitochondrion matrix. The protein localises to the mitochondrion. Its subcellular location is the cytoplasm. It catalyses the reaction (R)-methylmalonyl-CoA = succinyl-CoA. Inhibited by itaconyl-CoA, a metabolite that inactivates the coenzyme B12 cofactor. Catalyzes the reversible isomerization of methylmalonyl-CoA (MMCoA) (generated from branched-chain amino acid metabolism and degradation of dietary odd chain fatty acids and cholesterol) to succinyl-CoA (3-carboxypropionyl-CoA), a key intermediate of the tricarboxylic acid cycle. In Mus musculus (Mouse), this protein is Methylmalonyl-CoA mutase, mitochondrial (Mmut).